Consider the following 287-residue polypeptide: Hydroxysteroid 11-beta-dehydrogenase 1-like protein (287 aa).

The first 15 residues, 1–15 (MKVLLLTGLGALFFA), serve as a signal peptide directing secretion. Residues 36–62 (GASA…TAHT), 87–88 (DM), and 114–116 (NHI) each bind NADP(+). Serine 165 lines the substrate pocket. The active-site Proton acceptor is the tyrosine 178. Residues 178 to 182 (YSAAK) and 211 to 217 (GLRDRAS) contribute to the NADP(+) site.

Belongs to the short-chain dehydrogenases/reductases (SDR) family.

It is found in the secreted. It carries out the reaction cortisone + NADPH + H(+) = cortisol + NADP(+). Its function is as follows. Unidirectional NADP(+)-dependent cortisol dehydrogenase (in vitro). In Macaca fascicularis (Crab-eating macaque), this protein is Hydroxysteroid 11-beta-dehydrogenase 1-like protein (HSD11B1L).